A 74-amino-acid chain; its full sequence is Small ribosomal subunit protein bS18 (74 aa).

The protein belongs to the bacterial ribosomal protein bS18 family. Part of the 30S ribosomal subunit. Forms a tight heterodimer with protein bS6.

In terms of biological role, binds as a heterodimer with protein bS6 to the central domain of the 16S rRNA, where it helps stabilize the platform of the 30S subunit. This is Small ribosomal subunit protein bS18 from Chlorobaculum tepidum (strain ATCC 49652 / DSM 12025 / NBRC 103806 / TLS) (Chlorobium tepidum).